A 1003-amino-acid chain; its full sequence is Putative helicase MOV-10 (1003 aa).

The residue at position 148 (Lys148) is an N6-acetyllysine. Residues Thr160 and Thr254 each carry the phosphothreonine modification. Position 432 is a phosphoserine (Ser432). 524–531 (GPPGTGKT) is an ATP binding site. Residues 645 to 648 (DEAG) carry the DEAG box motif. Residues 921–965 (NPLLLGHDPDWKVFLEFCKENGGYTGCPFPAKLDLQQGQNLLQGL) are interaction with AGO2 and APOBEC3G. The segment at 968-1003 (LSPSTSGLKSHDYLPQEREGEEGLSLQVEPEWRNEL) is disordered. A phosphoserine mark is found at Ser969 and Ser977. Basic and acidic residues predominate over residues 976-985 (KSHDYLPQER).

Belongs to the DNA2/NAM7 helicase family. SDE3 subfamily. As to quaternary structure, interacts with DICER1, AGO2, TARBP2, EIF6 and RPL7A (60S ribosome subunit); they form a large RNA-induced silencing complex (RISC). Interacts with APOBEC3G in an RNA-dependent manner. Interacts with TRIM71 (via NHL repeats) in an RNA-dependent manner. Interacts with both protein products of LIRE1, ORF1p and ORF2p. Interacts with TUT4 and, to a lesser extent, TUT7; the interactions are RNA-dependent. Interacts with AGO2, TNRC6B and UPF1; the interactions are direct and RNA-dependent. Interacts with FMR1; this interaction is direct, occurs in an RNA-dependent manner on polysomes and induces association of MOV10 with RNAs. Interacts with SHFL; the interaction increases in presence of RNA. Interacts with DHX34; the interaction is-RNA independent. Interacts with RBM46. Post-translationally, ubiquitinated by the DCX(DCAF12) complex that specifically recognizes the glutamate-leucine (Glu-Leu) degron at the C-terminus, leading to its degradation.

The protein resides in the cytoplasm. The protein localises to the P-body. Its subcellular location is the cytoplasmic ribonucleoprotein granule. It localises to the stress granule. It is found in the nucleus. It catalyses the reaction ATP + H2O = ADP + phosphate + H(+). 5' to 3' RNA helicase that is involved in a number of cellular roles ranging from mRNA metabolism and translation, modulation of viral infectivity, inhibition of retrotransposition, or regulation of synaptic transmission. Plays an important role in innate antiviral immunity by promoting type I interferon production. Mechanistically, specifically uses IKKepsilon/IKBKE as the mediator kinase for IRF3 activation. Contributes to UPF1 mRNA target degradation by translocation along 3' UTRs. Required for microRNA (miRNA)-mediated gene silencing by the RNA-induced silencing complex (RISC). Required for both miRNA-mediated translational repression and miRNA-mediated cleavage of complementary mRNAs by RISC. In cooperation with FMR1, regulates miRNA-mediated translational repression by AGO2. Restricts retrotransposition of long interspersed element-1 (LINE-1) in cooperation with TUT4 and TUT7 counteracting the RNA chaperonne activity of L1RE1. Facilitates LINE-1 uridylation by TUT4 and TUT7. Required for embryonic viability and for normal central nervous system development and function. Plays two critical roles in early brain development: suppresses retroelements in the nucleus by directly inhibiting cDNA synthesis, while regulates cytoskeletal mRNAs to influence neurite outgrowth in the cytosol. May function as a messenger ribonucleoprotein (mRNP) clearance factor. The chain is Putative helicase MOV-10 (MOV10) from Bos taurus (Bovine).